The chain runs to 385 residues: Acetylornithine aminotransferase (385 aa).

Residues 95–96 (GA) and phenylalanine 122 each bind pyridoxal 5'-phosphate. N(2)-acetyl-L-ornithine is bound at residue arginine 125. 208–211 (DEIQ) is a binding site for pyridoxal 5'-phosphate. N6-(pyridoxal phosphate)lysine is present on lysine 237. Threonine 265 is a binding site for N(2)-acetyl-L-ornithine. Threonine 266 is a binding site for pyridoxal 5'-phosphate.

This sequence belongs to the class-III pyridoxal-phosphate-dependent aminotransferase family. ArgD subfamily. Homodimer. It depends on pyridoxal 5'-phosphate as a cofactor.

The protein localises to the cytoplasm. It catalyses the reaction N(2)-acetyl-L-ornithine + 2-oxoglutarate = N-acetyl-L-glutamate 5-semialdehyde + L-glutamate. The protein operates within amino-acid biosynthesis; L-arginine biosynthesis; N(2)-acetyl-L-ornithine from L-glutamate: step 4/4. This chain is Acetylornithine aminotransferase, found in Bacillus subtilis (strain 168).